Here is a 249-residue protein sequence, read N- to C-terminus: Metal-staphylopine import system ATP-binding protein CntF (249 aa).

Positions 2–244 (IKVTDVEKSY…DNAYTRELIE (243 aa)) constitute an ABC transporter domain. 42-49 (GESGSGKS) contributes to the ATP binding site.

This sequence belongs to the ABC transporter superfamily. The complex is composed of two ATP-binding proteins (CntD and CntF), two transmembrane proteins (CntB and CntC) and a solute-binding protein (CntA).

It localises to the cell membrane. Part of the ABC transporter complex CntABCDF (Opp1) involved in the uptake of metal in complex with the metallophore staphylopine (StP). May be involved in the import of a large array of divalent metals ions such as nickel, cobalt, zinc, copper and iron. Probably responsible for energy coupling to the transport system. This chain is Metal-staphylopine import system ATP-binding protein CntF, found in Staphylococcus aureus (strain Mu50 / ATCC 700699).